The sequence spans 259 residues: 3-deoxy-manno-octulosonate cytidylyltransferase (259 aa).

It belongs to the KdsB family.

The protein resides in the cytoplasm. The enzyme catalyses 3-deoxy-alpha-D-manno-oct-2-ulosonate + CTP = CMP-3-deoxy-beta-D-manno-octulosonate + diphosphate. It participates in nucleotide-sugar biosynthesis; CMP-3-deoxy-D-manno-octulosonate biosynthesis; CMP-3-deoxy-D-manno-octulosonate from 3-deoxy-D-manno-octulosonate and CTP: step 1/1. It functions in the pathway bacterial outer membrane biogenesis; lipopolysaccharide biosynthesis. Activates KDO (a required 8-carbon sugar) for incorporation into bacterial lipopolysaccharide in Gram-negative bacteria. The polypeptide is 3-deoxy-manno-octulosonate cytidylyltransferase (Xanthomonas euvesicatoria pv. vesicatoria (strain 85-10) (Xanthomonas campestris pv. vesicatoria)).